A 607-amino-acid polypeptide reads, in one-letter code: Glycosyltransferase 25 family member (607 aa).

Positions 1 to 22 (MKPVSCVGLLVLLVGVLVTVKG) are cleaved as a signal peptide. N-linked (GlcNAc...) asparagine glycosylation is found at asparagine 226, asparagine 254, asparagine 514, and asparagine 565. A disordered region spans residues 566-607 (DTSDSSAEKKGDKEQLSSKTLMDSTISRDEHELSVANRKSEL). Composition is skewed to basic and acidic residues over residues 571 to 581 (SAEKKGDKEQL) and 591 to 607 (ISRD…KSEL). The Prevents secretion from ER signature appears at 604 to 607 (KSEL).

Belongs to the glycosyltransferase 25 family.

It localises to the endoplasmic reticulum lumen. The polypeptide is Glycosyltransferase 25 family member (Aedes aegypti (Yellowfever mosquito)).